A 152-amino-acid chain; its full sequence is Ribosome maturation factor RimP (152 aa).

The protein belongs to the RimP family.

The protein localises to the cytoplasm. In terms of biological role, required for maturation of 30S ribosomal subunits. The protein is Ribosome maturation factor RimP of Paraburkholderia phymatum (strain DSM 17167 / CIP 108236 / LMG 21445 / STM815) (Burkholderia phymatum).